A 299-amino-acid polypeptide reads, in one-letter code: Homoserine O-acetyltransferase (299 aa).

Cys142 serves as the catalytic Acyl-thioester intermediate. Lys163 and Ser192 together coordinate substrate. His235 acts as the Proton acceptor in catalysis. Glu237 is a catalytic residue. Arg249 is a substrate binding site.

It belongs to the MetA family.

The protein resides in the cytoplasm. It catalyses the reaction L-homoserine + acetyl-CoA = O-acetyl-L-homoserine + CoA. The protein operates within amino-acid biosynthesis; L-methionine biosynthesis via de novo pathway; O-acetyl-L-homoserine from L-homoserine: step 1/1. Functionally, transfers an acetyl group from acetyl-CoA to L-homoserine, forming acetyl-L-homoserine. This is Homoserine O-acetyltransferase from Synechococcus sp. (strain ATCC 27144 / PCC 6301 / SAUG 1402/1) (Anacystis nidulans).